The chain runs to 356 residues: tRNA N6-adenosine threonylcarbamoyltransferase (356 aa).

Positions 115 and 119 each coordinate Fe cation. Substrate contacts are provided by residues 138–142 (LVSGG), aspartate 171, glycine 184, and asparagine 283. Aspartate 311 contacts Fe cation.

The protein belongs to the KAE1 / TsaD family. Fe(2+) serves as cofactor.

The protein resides in the cytoplasm. It catalyses the reaction L-threonylcarbamoyladenylate + adenosine(37) in tRNA = N(6)-L-threonylcarbamoyladenosine(37) in tRNA + AMP + H(+). Functionally, required for the formation of a threonylcarbamoyl group on adenosine at position 37 (t(6)A37) in tRNAs that read codons beginning with adenine. Is involved in the transfer of the threonylcarbamoyl moiety of threonylcarbamoyl-AMP (TC-AMP) to the N6 group of A37, together with TsaE and TsaB. TsaD likely plays a direct catalytic role in this reaction. The sequence is that of tRNA N6-adenosine threonylcarbamoyltransferase from Prochlorococcus marinus (strain MIT 9312).